We begin with the raw amino-acid sequence, 159 residues long: Nascent polypeptide-associated complex subunit beta (159 aa).

Disordered stretches follow at residues 1 to 39 and 121 to 159; these read MDMEKLKRMQARGGVRTGDGKGTPRRKVKNVHKSTGMDD and ESYQSMQKAEGGEDKKDDDEDDDDIPDLVEGENFEDKVE. Positions 23-32 are enriched in basic residues; the sequence is TPRRKVKNVH. In terms of domain architecture, NAC-A/B spans 36–101; it reads GMDDKKLQTS…GEDKELTELV (66 aa). Residues 136–153 show a composition bias toward acidic residues; it reads KDDDEDDDDIPDLVEGEN.

Belongs to the NAC-beta family. In terms of assembly, part of the nascent polypeptide-associated complex (NAC), consisting of EGD2 and EGD1. NAC associates with ribosomes via EGD1.

It localises to the cytoplasm. The protein localises to the nucleus. In terms of biological role, component of the nascent polypeptide-associated complex (NAC), a dynamic component of the ribosomal exit tunnel, protecting the emerging polypeptides from interaction with other cytoplasmic proteins to ensure appropriate nascent protein targeting. The NAC complex also promotes mitochondrial protein import by enhancing productive ribosome interactions with the outer mitochondrial membrane and blocks the inappropriate interaction of ribosomes translating non-secretory nascent polypeptides with translocation sites in the membrane of the endoplasmic reticulum. EGD1 may act as a transcription factor that exert a negative effect on the expression of several genes that are transcribed by RNA polymerase II. This Botryotinia fuckeliana (strain B05.10) (Noble rot fungus) protein is Nascent polypeptide-associated complex subunit beta (egd1).